Reading from the N-terminus, the 86-residue chain is UPF0125 protein bbp_234 (86 aa).

This sequence belongs to the UPF0125 (RnfH) family.

The chain is UPF0125 protein bbp_234 from Buchnera aphidicola subsp. Baizongia pistaciae (strain Bp).